The sequence spans 151 residues: Putative pre-16S rRNA nuclease (151 aa).

Belongs to the YqgF nuclease family.

The protein resides in the cytoplasm. Could be a nuclease involved in processing of the 5'-end of pre-16S rRNA. This Thermosynechococcus vestitus (strain NIES-2133 / IAM M-273 / BP-1) protein is Putative pre-16S rRNA nuclease.